Here is a 199-residue protein sequence, read N- to C-terminus: Dephospho-CoA kinase (199 aa).

The region spanning 4–199 (VLGITGGIAT…KWLEEQIGKK (196 aa)) is the DPCK domain. 12 to 17 (ATGKST) provides a ligand contact to ATP.

Belongs to the CoaE family.

It is found in the cytoplasm. It carries out the reaction 3'-dephospho-CoA + ATP = ADP + CoA + H(+). The protein operates within cofactor biosynthesis; coenzyme A biosynthesis; CoA from (R)-pantothenate: step 5/5. In terms of biological role, catalyzes the phosphorylation of the 3'-hydroxyl group of dephosphocoenzyme A to form coenzyme A. This chain is Dephospho-CoA kinase, found in Enterococcus faecalis (strain ATCC 700802 / V583).